Consider the following 84-residue polypeptide: M-zodatoxin-Lt2b (84 aa).

The N-terminal stretch at 1–22 is a signal peptide; it reads MKYFVIALALAVALVCIAESTA. The propeptide occupies 23-58; the sequence is YEVNEELENELDDLDDAAWLAVAEELQGLEDFEESR. Positions 55-58 match the Processing quadruplet motif motif; that stretch reads EESR.

In terms of processing, cleavage of the propeptide depends on the processing quadruplet motif (XXXR, with at least one of X being E). As to expression, expressed by the venom gland.

The protein localises to the secreted. Its function is as follows. Has antimicrobial activity against both Gram-positive and Gram-negative bacteria, and yeasts. Also has a strong hemolytic activity against rabbit erythrocytes. Causes paralysis, but is not lethal when injected into insect (M.domestica) larvae. This is M-zodatoxin-Lt2b from Lachesana tarabaevi (Spider).